Here is a 2541-residue protein sequence, read N- to C-terminus: Talin-1 (2541 aa).

One can recognise an FERM domain in the interval 86-403 (RPLKIRMLDG…GYIDIILKKK (318 aa)). An interaction with LAYN region spans residues 280-435 (FMAHKNCGNM…PKKSTVLQQQ (156 aa)). Positions 482 to 655 (RGHMPPLTSA…QTSGELLQQI (174 aa)) are helical bundle R1. Positions 656 to 786 (GESDTDPRFQ…ALNDLLQHIK (131 aa)) are helical bundle R2. The interval 787 to 911 (QHATGGQPIG…NAAAQNAIKK (125 aa)) is helical bundle R3. The interval 913 to 1043 (LVHKLEHAAK…RTAAQKAQEA (131 aa)) is helical bundle R4. Positions 1045–1205 (GPLEIDSALG…NRCVNCLPGQ (161 aa)) are helical bundle R5. A helical bundle R6 region spans residues 1206 to 1356 (RDVDAAIRMV…QLITMCTQQA (151 aa)). A helical bundle R7A region spans residues 1357–1452 (PGQKECDNAL…AYLVGVSDPN (96 aa)). The segment at 1358–1658 (GQKECDNALR…NMRDKAPGQR (301 aa)) is interaction with VCL and F-actin. Positions 1460 to 1579 (LVDPTQFARA…NLTAFASNPE (120 aa)) are helical bundle R8. Thr1486 is a glycosylation site (O-linked (GlcNAc) threonine). A helical bundle R7B region spans residues 1580–1652 (FATVPAQISP…IKKLITNMRD (73 aa)). The interval 1654–1821 (APGQRECDEA…TLNEAASAAG (168 aa)) is helical bundle R9. The helical bundle R10 stretch occupies residues 1822–1972 (VVGGMVDSIT…VLAALQAGNR (151 aa)). A glycan (O-linked (GlcNAc) threonine) is linked at Thr1889. Positions 1973–2139 (GTQACITAAS…TVKAVEDEAT (167 aa)) are helical bundle R11. The tract at residues 2140–2293 (KGTRALEATI…QAAEAMKGTE (154 aa)) is helical bundle R12. Positions 2292–2531 (TEWVDPEDPT…MIRQQQYKFL (240 aa)) constitute an I/LWEQ domain. The interval 2299 to 2481 (DPTVIAENEL…AAQKAAAFQD (183 aa)) is helical bundle R13.

In terms of assembly, interacts with PIP5K1C and NRAP. Binds with high affinity to vinculin VCL and with low affinity to integrins. Interacts with APBB1IP; this inhibits VCL binding. Interacts with F-actin. Interacts with LAYN. Interacts with THSD1. Post-translationally, phosphorylated.

It localises to the cell projection. The protein resides in the ruffle membrane. The protein localises to the cytoplasm. It is found in the cytoskeleton. Its subcellular location is the cell surface. It localises to the cell junction. The protein resides in the focal adhesion. In terms of biological role, high molecular weight cytoskeletal protein concentrated at regions of cell-substratum contact and, in lymphocytes, at cell-cell contacts. Involved in connections of major cytoskeletal structures to the plasma membrane. The protein is Talin-1 (TLN1) of Gallus gallus (Chicken).